A 226-amino-acid polypeptide reads, in one-letter code: PKHD-type hydroxylase Plav_0377 (226 aa).

Residues 78–178 (KVLPPRFNRY…RLASFFWVQS (101 aa)) enclose the Fe2OG dioxygenase domain. Residues histidine 96, aspartate 98, and histidine 159 each contribute to the Fe cation site. Arginine 169 provides a ligand contact to 2-oxoglutarate.

It depends on Fe(2+) as a cofactor. L-ascorbate is required as a cofactor.

This is PKHD-type hydroxylase Plav_0377 from Parvibaculum lavamentivorans (strain DS-1 / DSM 13023 / NCIMB 13966).